A 258-amino-acid polypeptide reads, in one-letter code: Cytochrome b-c1 complex subunit Rieske-1, mitochondrial (258 aa).

Residues 1–46 constitute a mitochondrion transit peptide; it reads WPVRSAAPSSSAFISANHFSSDDDSSSPRSISPSLASVFLHHTRGF. Over 47–95 the chain is Mitochondrial matrix; that stretch reads SSNSVSPAHDMGLVPDLPPTVAAIKNPTSKIVYDEHNHERYPPGDPSKR. A helical membrane pass occupies residues 96–118; sequence AFAYFVLTGGRFVYASLMRLLIL. Topologically, residues 119 to 258 are mitochondrial intermembrane; sequence KFVLSMSASK…FLEENKLLIG (140 aa). A Rieske domain is found at 161–256; that stretch reads RRRTEDDISL…YSFLEENKLL (96 aa). [2Fe-2S] cluster is bound by residues C201, H203, C220, and H223. A disulfide bond links C206 and C222.

This sequence belongs to the Rieske iron-sulfur protein family. In terms of assembly, component of the ubiquinol-cytochrome c oxidoreductase (cytochrome b-c1 complex, complex III, CIII), a multisubunit enzyme composed of 3 respiratory subunits cytochrome b, cytochrome c1 and Rieske protein, 2 core protein subunits, and several low-molecular weight protein subunits. The complex exists as an obligatory dimer and forms supercomplexes (SCs) in the inner mitochondrial membrane with cytochrome c oxidase (complex IV, CIV). [2Fe-2S] cluster is required as a cofactor.

Its subcellular location is the mitochondrion inner membrane. It carries out the reaction a quinol + 2 Fe(III)-[cytochrome c](out) = a quinone + 2 Fe(II)-[cytochrome c](out) + 2 H(+)(out). Its function is as follows. Component of the ubiquinol-cytochrome c oxidoreductase, a multisubunit transmembrane complex that is part of the mitochondrial electron transport chain which drives oxidative phosphorylation. The respiratory chain contains 3 multisubunit complexes succinate dehydrogenase (complex II, CII), ubiquinol-cytochrome c oxidoreductase (cytochrome b-c1 complex, complex III, CIII) and cytochrome c oxidase (complex IV, CIV), that cooperate to transfer electrons derived from NADH and succinate to molecular oxygen, creating an electrochemical gradient over the inner membrane that drives transmembrane transport and the ATP synthase. The cytochrome b-c1 complex catalyzes electron transfer from ubiquinol to cytochrome c, linking this redox reaction to translocation of protons across the mitochondrial inner membrane, with protons being carried across the membrane as hydrogens on the quinol. In the process called Q cycle, 2 protons are consumed from the matrix, 4 protons are released into the intermembrane space and 2 electrons are passed to cytochrome c. The Rieske protein is a catalytic core subunit containing a [2Fe-2S] iron-sulfur cluster. It cycles between 2 conformational states during catalysis to transfer electrons from the quinol bound in the Q(0) site in cytochrome b to cytochrome c1. In Nicotiana tabacum (Common tobacco), this protein is Cytochrome b-c1 complex subunit Rieske-1, mitochondrial.